Reading from the N-terminus, the 109-residue chain is Sperm-specific class P protein 16 (109 aa).

Residues 2–109 (SLTADPPACT…TVTIPMSATA (108 aa)) form the MSP domain.

In terms of tissue distribution, expressed at higher level in testis.

This Caenorhabditis elegans protein is Sperm-specific class P protein 16 (ssp-16).